The sequence spans 132 residues: Cytochrome B5 isoform C (132 aa).

A Cytochrome b5 heme-binding domain is found at 2–78 (ANLISFHDVA…MKKYCIGDVD (77 aa)). Positions 37 and 61 each coordinate heme. The helical transmembrane segment at 110–129 (LLIYLIPLLILGVAFALRFY) threads the bilayer.

It belongs to the cytochrome b5 family. Interacts with CER1, BI-1, FAH1 and FAH2.

It is found in the endoplasmic reticulum membrane. In terms of biological role, membrane bound hemoprotein which function as an electron carrier for several membrane bound oxygenases, including fatty acid desaturases. This Arabidopsis thaliana (Mouse-ear cress) protein is Cytochrome B5 isoform C.